We begin with the raw amino-acid sequence, 607 residues long: Fatty acid amide hydrolase (607 aa).

Active-site charge relay system residues include Lys204 and Ser280. Gly301 to Ser304 contacts substrate. Residue Ser304 is the Acyl-ester intermediate of the active site.

The protein belongs to the amidase family. In terms of assembly, forms homodimers.

It localises to the endoplasmic reticulum membrane. Its subcellular location is the cell membrane. The catalysed reaction is N-(9Z,12Z-octadecadienoyl)-ethanolamine + H2O = ethanolamine + (9Z,12Z)-octadecadienoate. Functionally, catalyzes the hydrolysis of bioactive endogenous fatty acid amides to their corresponding acids. The hydrolysis of endogenous amidated lipids terminates their participation as lipid mediators in various signaling systems. Converts a wide range of N-acylethanolamines (NAEs) to their corresponding free fatty acids and ethanolamine. This chain is Fatty acid amide hydrolase, found in Medicago truncatula (Barrel medic).